The following is a 501-amino-acid chain: 5-beta-cholestane-3-alpha,7-alpha-diol 12-alpha-hydroxylase (501 aa).

The helical transmembrane segment at 1 to 21 (MVLWGPVLGVLLVAIVGYLCL) threads the bilayer. At S326 the chain carries Phosphoserine. Residue C440 participates in heme binding.

The protein belongs to the cytochrome P450 family. Requires heme as cofactor.

The protein localises to the endoplasmic reticulum membrane. Its subcellular location is the microsome membrane. The enzyme catalyses 7alpha-hydroxycholest-4-en-3-one + reduced [NADPH--hemoprotein reductase] + O2 = 7alpha,12alpha-dihydroxycholest-4-en-3-one + oxidized [NADPH--hemoprotein reductase] + H2O + H(+). It catalyses the reaction 5beta-cholestane-3alpha,7alpha-diol + reduced [NADPH--hemoprotein reductase] + O2 = 5beta-cholestane-3alpha,7alpha,12alpha-triol + oxidized [NADPH--hemoprotein reductase] + H2O + H(+). The catalysed reaction is chenodeoxycholate + reduced [NADPH--hemoprotein reductase] + O2 = cholate + oxidized [NADPH--hemoprotein reductase] + H2O + H(+). It participates in lipid metabolism; bile acid biosynthesis. Its function is as follows. A cytochrome P450 monooxygenase involved in primary bile acid biosynthesis. Catalyzes the 12alpha-hydroxylation of 7alpha-hydroxy-4-cholesten-3-one, an intermediate metabolite in cholic acid biosynthesis. Controls biliary balance of cholic acid and chenodeoxycholic acid, ultimately regulating the intestinal absorption of dietary lipids. Mechanistically, uses molecular oxygen inserting one oxygen atom into a substrate, and reducing the second into a water molecule, with two electrons provided by NADPH via cytochrome P450 reductase (CPR; NADPH--hemoprotein reductase). In Sus scrofa (Pig), this protein is 5-beta-cholestane-3-alpha,7-alpha-diol 12-alpha-hydroxylase (CYP8B1).